Reading from the N-terminus, the 254-residue chain is NAD kinase (254 aa).

Aspartate 44 acts as the Proton acceptor in catalysis. Residues 44-45 (DG), 114-115 (NE), aspartate 144, alanine 152, 155-160 (TAYNYS), and alanine 179 each bind NAD(+).

It belongs to the NAD kinase family. Requires a divalent metal cation as cofactor.

It is found in the cytoplasm. The enzyme catalyses NAD(+) + ATP = ADP + NADP(+) + H(+). Functionally, involved in the regulation of the intracellular balance of NAD and NADP, and is a key enzyme in the biosynthesis of NADP. Catalyzes specifically the phosphorylation on 2'-hydroxyl of the adenosine moiety of NAD to yield NADP. In Cereibacter sphaeroides (strain ATCC 17025 / ATH 2.4.3) (Rhodobacter sphaeroides), this protein is NAD kinase.